Consider the following 359-residue polypeptide: Heat-inducible transcription repressor HrcA (359 aa).

The protein belongs to the HrcA family.

In terms of biological role, negative regulator of class I heat shock genes (grpE-dnaK-dnaJ and groELS operons). Prevents heat-shock induction of these operons. The polypeptide is Heat-inducible transcription repressor HrcA (Rhizobium meliloti (strain 1021) (Ensifer meliloti)).